We begin with the raw amino-acid sequence, 110 residues long: Ribonuclease P protein component (110 aa).

This sequence belongs to the RnpA family. In terms of assembly, consists of a catalytic RNA component (M1 or rnpB) and a protein subunit.

The catalysed reaction is Endonucleolytic cleavage of RNA, removing 5'-extranucleotides from tRNA precursor.. RNaseP catalyzes the removal of the 5'-leader sequence from pre-tRNA to produce the mature 5'-terminus. It can also cleave other RNA substrates such as 4.5S RNA. The protein component plays an auxiliary but essential role in vivo by binding to the 5'-leader sequence and broadening the substrate specificity of the ribozyme. This chain is Ribonuclease P protein component, found in Mesorhizobium japonicum (strain LMG 29417 / CECT 9101 / MAFF 303099) (Mesorhizobium loti (strain MAFF 303099)).